We begin with the raw amino-acid sequence, 270 residues long: Undecaprenyl-diphosphatase 1 (270 aa).

7 helical membrane-spanning segments follow: residues 5–25 (YYVL…PIPI), 42–62 (IEGF…VLLI), 89–109 (FFFI…GVLF), 117–137 (LKGV…LWII), 192–212 (FSFL…ITDI), 220–240 (TLFV…YISL), and 250–270 (GNLK…LIFL).

It belongs to the UppP family.

The protein localises to the cell membrane. The catalysed reaction is di-trans,octa-cis-undecaprenyl diphosphate + H2O = di-trans,octa-cis-undecaprenyl phosphate + phosphate + H(+). Catalyzes the dephosphorylation of undecaprenyl diphosphate (UPP). Confers resistance to bacitracin. This is Undecaprenyl-diphosphatase 1 from Bacillus cereus (strain ATCC 14579 / DSM 31 / CCUG 7414 / JCM 2152 / NBRC 15305 / NCIMB 9373 / NCTC 2599 / NRRL B-3711).